The sequence spans 182 residues: UPF0397 protein BCE_2667 (182 aa).

5 helical membrane passes run 9–29 (VVAI…GFSI), 40–60 (AILT…IGLI), 71–91 (WGIW…MGLI), 114–134 (ITGL…DIIV), and 142–162 (IVIQ…VLGL).

The protein belongs to the UPF0397 family.

The protein localises to the cell membrane. This chain is UPF0397 protein BCE_2667, found in Bacillus cereus (strain ATCC 10987 / NRS 248).